A 229-amino-acid polypeptide reads, in one-letter code: C-&gt;U-editing enzyme APOBEC-1 (229 aa).

Residues 10 to 134 form the CMP/dCMP-type deaminase domain; it reads VDPTLRRRIE…QRNRQGLRDL (125 aa). H61 is a Zn(2+) binding site. E63 functions as the Proton donor in the catalytic mechanism. Residues C93 and C96 each contribute to the Zn(2+) site.

This sequence belongs to the cytidine and deoxycytidylate deaminase family. In terms of assembly, homodimer. Interacts with A1CF; form an mRNA editing complex. Interacts with RBM47; form an mRNA editing complex. Found in a complex with CELF2/CUGBP2 and A1CF. Interacts with HNRPAB. Interacts with SYNCRIP. The cofactor is Zn(2+).

Its subcellular location is the cytoplasm. It localises to the nucleus. The catalysed reaction is a cytidine in mRNA + H2O + H(+) = a uridine in mRNA + NH4(+). The enzyme catalyses cytidine(6666) in apoB mRNA + H2O + H(+) = uridine(6666) in apoB mRNA + NH4(+). Functionally, cytidine deaminase catalyzing the cytidine to uridine postranscriptional editing of a variety of mRNAs. Form complexes with cofactors that confer differential editing activity and selectivity. Responsible for the postranscriptional editing of a CAA codon for Gln to a UAA codon for stop in the apolipoprotein B mRNA. Also involved in CGA (Arg) to UGA (Stop) editing in the NF1 mRNA. May also play a role in the epigenetic regulation of gene expression by participating in DNA demethylation. The sequence is that of C-&gt;U-editing enzyme APOBEC-1 from Mesocricetus auratus (Golden hamster).